Reading from the N-terminus, the 179-residue chain is Large ribosomal subunit protein uL5 (179 aa).

The protein belongs to the universal ribosomal protein uL5 family. Part of the 50S ribosomal subunit; part of the 5S rRNA/L5/L18/L25 subcomplex. Contacts the 5S rRNA and the P site tRNA. Forms a bridge to the 30S subunit in the 70S ribosome.

Its function is as follows. This is one of the proteins that bind and probably mediate the attachment of the 5S RNA into the large ribosomal subunit, where it forms part of the central protuberance. In the 70S ribosome it contacts protein S13 of the 30S subunit (bridge B1b), connecting the 2 subunits; this bridge is implicated in subunit movement. Contacts the P site tRNA; the 5S rRNA and some of its associated proteins might help stabilize positioning of ribosome-bound tRNAs. In Shewanella baltica (strain OS223), this protein is Large ribosomal subunit protein uL5.